A 200-amino-acid polypeptide reads, in one-letter code: 3-isopropylmalate dehydratase small subunit (200 aa).

Belongs to the LeuD family. LeuD type 1 subfamily. Heterodimer of LeuC and LeuD.

The enzyme catalyses (2R,3S)-3-isopropylmalate = (2S)-2-isopropylmalate. It participates in amino-acid biosynthesis; L-leucine biosynthesis; L-leucine from 3-methyl-2-oxobutanoate: step 2/4. Functionally, catalyzes the isomerization between 2-isopropylmalate and 3-isopropylmalate, via the formation of 2-isopropylmaleate. This Methylobacterium radiotolerans (strain ATCC 27329 / DSM 1819 / JCM 2831 / NBRC 15690 / NCIMB 10815 / 0-1) protein is 3-isopropylmalate dehydratase small subunit.